Consider the following 566-residue polypeptide: Arginine--tRNA ligase (566 aa).

A 'HIGH' region motif is present at residues 121 to 131 (ANPNGPFHIGH).

This sequence belongs to the class-I aminoacyl-tRNA synthetase family.

The protein localises to the cytoplasm. It carries out the reaction tRNA(Arg) + L-arginine + ATP = L-arginyl-tRNA(Arg) + AMP + diphosphate. This is Arginine--tRNA ligase from Methanococcus maripaludis (strain DSM 14266 / JCM 13030 / NBRC 101832 / S2 / LL).